We begin with the raw amino-acid sequence, 176 residues long: Protein tyrosine phosphatase PRL-1 (176 aa).

A Tyrosine-protein phosphatase domain is found at 13–165 (GESDAVVFRF…YKPRHQEGNE (153 aa)). A disulfide bond links C52 and C107. The active-site Proton donor is D75. C107 acts as the Phosphocysteine intermediate in catalysis. 109–113 (AGLGR) provides a ligand contact to substrate. C173 is modified (cysteine methyl ester). Residue C173 is the site of S-farnesyl cysteine attachment. Positions 174 to 176 (AVM) are cleaved as a propeptide — removed in mature form.

The protein belongs to the protein-tyrosine phosphatase family.

It is found in the flagellar pocket. The enzyme catalyses O-phospho-L-tyrosyl-[protein] + H2O = L-tyrosyl-[protein] + phosphate. Activated in a reduced environment which promotes the reduction of the disulfide bond between the regulatory Cys-52 and the catalytic Cys-107 residues. Inhibited by sodium orthovanadate. Functionally, has protein tyrosine phosphatase activity. This Trypanosoma cruzi (strain CL Brener) protein is Protein tyrosine phosphatase PRL-1.